Here is a 179-residue protein sequence, read N- to C-terminus: Large ribosomal subunit protein uL5 (179 aa).

This sequence belongs to the universal ribosomal protein uL5 family. In terms of assembly, part of the 50S ribosomal subunit; part of the 5S rRNA/L5/L18/L25 subcomplex. Contacts the 5S rRNA and the P site tRNA. Forms a bridge to the 30S subunit in the 70S ribosome.

Its function is as follows. This is one of the proteins that bind and probably mediate the attachment of the 5S RNA into the large ribosomal subunit, where it forms part of the central protuberance. In the 70S ribosome it contacts protein S13 of the 30S subunit (bridge B1b), connecting the 2 subunits; this bridge is implicated in subunit movement. Contacts the P site tRNA; the 5S rRNA and some of its associated proteins might help stabilize positioning of ribosome-bound tRNAs. The polypeptide is Large ribosomal subunit protein uL5 (Dictyoglomus thermophilum (strain ATCC 35947 / DSM 3960 / H-6-12)).